The primary structure comprises 189 residues: dCTP deaminase (189 aa).

Residues 112-117, 136-138, Gln-157, Tyr-171, and Gln-181 each bind dCTP; these read KSTYAR and TLE. Glu-138 (proton donor/acceptor) is an active-site residue.

This sequence belongs to the dCTP deaminase family. As to quaternary structure, homotrimer.

It carries out the reaction dCTP + H2O + H(+) = dUTP + NH4(+). It participates in pyrimidine metabolism; dUMP biosynthesis; dUMP from dCTP (dUTP route): step 1/2. Functionally, catalyzes the deamination of dCTP to dUTP. This is dCTP deaminase from Albidiferax ferrireducens (strain ATCC BAA-621 / DSM 15236 / T118) (Rhodoferax ferrireducens).